The sequence spans 537 residues: 2-succinyl-5-enolpyruvyl-6-hydroxy-3-cyclohexene-1-carboxylate synthase (537 aa).

This sequence belongs to the TPP enzyme family. MenD subfamily. In terms of assembly, homodimer. Requires Mg(2+) as cofactor. The cofactor is Mn(2+). Thiamine diphosphate is required as a cofactor.

The catalysed reaction is isochorismate + 2-oxoglutarate + H(+) = 5-enolpyruvoyl-6-hydroxy-2-succinyl-cyclohex-3-ene-1-carboxylate + CO2. It participates in quinol/quinone metabolism; 1,4-dihydroxy-2-naphthoate biosynthesis; 1,4-dihydroxy-2-naphthoate from chorismate: step 2/7. The protein operates within quinol/quinone metabolism; menaquinone biosynthesis. In terms of biological role, catalyzes the thiamine diphosphate-dependent decarboxylation of 2-oxoglutarate and the subsequent addition of the resulting succinic semialdehyde-thiamine pyrophosphate anion to isochorismate to yield 2-succinyl-5-enolpyruvyl-6-hydroxy-3-cyclohexene-1-carboxylate (SEPHCHC). The sequence is that of 2-succinyl-5-enolpyruvyl-6-hydroxy-3-cyclohexene-1-carboxylate synthase from Rhodococcus erythropolis (strain PR4 / NBRC 100887).